The sequence spans 595 residues: DNA primase (595 aa).

The CHC2-type zinc finger occupies 38–62 (CPFHDEKTPSFIVYPTRGHYHCYGC). The Toprim domain maps to 251 to 331 (RRVILVEGQA…GITAIVCRLP (81 aa)). Mg(2+) is bound by residues E257, D302, and D304. Residues 430-441 (KGKKVSAKEPSS) are compositionally biased toward basic and acidic residues. The tract at residues 430–451 (KGKKVSAKEPSSESKQTSTEGK) is disordered.

The protein belongs to the DnaG primase family. Monomer. Interacts with DnaB. The cofactor is Zn(2+). It depends on Mg(2+) as a cofactor.

It carries out the reaction ssDNA + n NTP = ssDNA/pppN(pN)n-1 hybrid + (n-1) diphosphate.. Functionally, RNA polymerase that catalyzes the synthesis of short RNA molecules used as primers for DNA polymerase during DNA replication. The sequence is that of DNA primase from Chlamydia trachomatis serovar D (strain ATCC VR-885 / DSM 19411 / UW-3/Cx).